The sequence spans 630 residues: PR domain zinc finger protein 5 (630 aa).

Residues 8 to 124 enclose the SET domain; the sequence is DRFSLKSSRV…TDTELLIGYL (117 aa). The C2H2-type 1 zinc finger occupies 167–190; the sequence is YACPQCESSFTSEDILAEHLQTLH. A C2H2-type 2; atypical zinc finger spans residues 199-221; that stretch reads FKCKNCGKKFPVKQALQRHVLQC. The segment at 234 to 256 adopts a C2H2-type 3; atypical zinc-finger fold; it reads FQCSVCNSSFSSASSFEQHQETC. 13 C2H2-type zinc fingers span residues 262–287, 295–317, 320–342, 348–370, 376–398, 404–426, 432–455, 461–483, 489–511, 517–539, 545–567, 573–595, and 602–625; these read FVCK…ENVH, LICS…RKIH, FDCQ…MITH, YNCE…KVIH, YKCK…KKTH, FQCE…LLIH, FKCH…QVVH, YRCE…KKTH, KICP…IRSH, YQCP…IRTH, YKCS…KRTH, FQCD…KMTH, and AECQ…DNIH.

It belongs to the class V-like SAM-binding methyltransferase superfamily. Interacts with EHMT2/G9A, GFI1 and HDAC1. Widely expressed with highest levels in colon and ovary. Tends to be silenced in breast, colorectal, gastric and liver cancer tissues.

It localises to the nucleus. Functionally, sequence-specific DNA-binding transcription factor. Represses transcription at least in part by recruitment of the histone methyltransferase EHMT2/G9A and histone deacetylases such as HDAC1. Regulates hematopoiesis-associated protein-coding and microRNA (miRNA) genes. May regulate the expression of proteins involved in extracellular matrix development and maintenance, including fibrillar collagens, such as COL4A1 and COL11A1, connective tissue components, such as HAPLN1, and molecules regulating cell migration and adhesion, including EDIL3 and TGFB2. May cause G2/M arrest and apoptosis in cancer cells. The polypeptide is PR domain zinc finger protein 5 (PRDM5) (Homo sapiens (Human)).